Reading from the N-terminus, the 566-residue chain is 5'-AMP-activated protein kinase subunit gamma-2 (566 aa).

Positions 1–198 (MGSAAMDTKK…SRIYASSSPP (198 aa)) are disordered. The span at 15 to 25 (SSPGGSSGKKN) shows a compositional bias: low complexity. The span at 54–64 (NSEKHSSRKVD) shows a compositional bias: basic and acidic residues. S65, S71, S73, S90, S138, S143, S158, S161, and S162 each carry phosphoserine. Low complexity-rich tracts occupy residues 132–144 (KESS…STSP) and 156–172 (TSSV…VTKQ). A Phosphothreonine modification is found at T165. The segment covering 180-189 (YKQEPERPES) has biased composition (basic and acidic residues). At S196 the chain carries Phosphoserine. CBS domains are found at residues 272-332 (PTSS…KSPM), 354-412 (TFKP…MSDM), and 427-489 (IGTY…NLDI). Residues R299, 314 to 319 (MLTITD), V359, 380 to 381 (HR), and K399 contribute to the ADP site. Residues R299, 314-319 (MLTITD), V359, H380, 380-381 (HR), K399, T429, A434, 455-456 (SA), 471-474 (SKFD), R498, H527, 527-528 (HR), and 543-546 (SLSD) each bind AMP. Residues R299, 314 to 319 (MLTITD), V359, 380 to 381 (HR), R381, and K399 each bind ATP. An AMPK pseudosubstrate motif is present at residues 367–388 (LFDAVYSLIKNKIHRLPVIDPI). ADP contacts are provided by residues 471–474 (SKFD), R498, and 527–528 (HR). ATP contacts are provided by residues 471–474 (SKFD), R498, and 527–528 (HR). One can recognise a CBS 4 domain in the interval 501–559 (YFEGVVKCSKLETLETIVDRIVRAEVHRLVVVNEADSIVGIISLSDILQALILTPAGAK).

Belongs to the 5'-AMP-activated protein kinase gamma subunit family. AMPK is a heterotrimer of an alpha catalytic subunit (PRKAA1 or PRKAA2), a beta (PRKAB1 or PRKAB2) and a gamma non-catalytic subunits (PRKAG1, PRKAG2 or PRKAG3). Interacts with FNIP1 and FNIP2. Post-translationally, phosphorylated by ULK1; leading to negatively regulate AMPK activity and suggesting the existence of a regulatory feedback loop between ULK1 and AMPK. Glycosylated; O-GlcNAcylated by OGT, promoting the AMP-activated protein kinase (AMPK) activity.

In terms of biological role, AMP/ATP-binding subunit of AMP-activated protein kinase (AMPK), an energy sensor protein kinase that plays a key role in regulating cellular energy metabolism. In response to reduction of intracellular ATP levels, AMPK activates energy-producing pathways and inhibits energy-consuming processes: inhibits protein, carbohydrate and lipid biosynthesis, as well as cell growth and proliferation. AMPK acts via direct phosphorylation of metabolic enzymes, and by longer-term effects via phosphorylation of transcription regulators. Also acts as a regulator of cellular polarity by remodeling the actin cytoskeleton; probably by indirectly activating myosin. Gamma non-catalytic subunit mediates binding to AMP, ADP and ATP, leading to activate or inhibit AMPK: AMP-binding results in allosteric activation of alpha catalytic subunit (PRKAA1 or PRKAA2) both by inducing phosphorylation and preventing dephosphorylation of catalytic subunits. ADP also stimulates phosphorylation, without stimulating already phosphorylated catalytic subunit. ATP promotes dephosphorylation of catalytic subunit, rendering the AMPK enzyme inactive. The chain is 5'-AMP-activated protein kinase subunit gamma-2 (Prkag2) from Mus musculus (Mouse).